A 180-amino-acid chain; its full sequence is ATP synthase subunit delta (180 aa).

This sequence belongs to the ATPase delta chain family. As to quaternary structure, F-type ATPases have 2 components, F(1) - the catalytic core - and F(0) - the membrane proton channel. F(1) has five subunits: alpha(3), beta(3), gamma(1), delta(1), epsilon(1). F(0) has three main subunits: a(1), b(2) and c(10-14). The alpha and beta chains form an alternating ring which encloses part of the gamma chain. F(1) is attached to F(0) by a central stalk formed by the gamma and epsilon chains, while a peripheral stalk is formed by the delta and b chains.

Its subcellular location is the cell membrane. Its function is as follows. F(1)F(0) ATP synthase produces ATP from ADP in the presence of a proton or sodium gradient. F-type ATPases consist of two structural domains, F(1) containing the extramembraneous catalytic core and F(0) containing the membrane proton channel, linked together by a central stalk and a peripheral stalk. During catalysis, ATP synthesis in the catalytic domain of F(1) is coupled via a rotary mechanism of the central stalk subunits to proton translocation. This protein is part of the stalk that links CF(0) to CF(1). It either transmits conformational changes from CF(0) to CF(1) or is implicated in proton conduction. This chain is ATP synthase subunit delta, found in Dehalococcoides mccartyi (strain ATCC BAA-2266 / KCTC 15142 / 195) (Dehalococcoides ethenogenes (strain 195)).